We begin with the raw amino-acid sequence, 218 residues long: Large ribosomal subunit protein uL1 (218 aa).

This sequence belongs to the universal ribosomal protein uL1 family. As to quaternary structure, part of the 50S ribosomal subunit.

Binds directly to 23S rRNA. Probably involved in E site tRNA release. Its function is as follows. Protein L1 is also a translational repressor protein, it controls the translation of its operon by binding to its mRNA. The polypeptide is Large ribosomal subunit protein uL1 (Metallosphaera sedula (strain ATCC 51363 / DSM 5348 / JCM 9185 / NBRC 15509 / TH2)).